The sequence spans 326 residues: Fructokinase (326 aa).

The interval 275-326 (EQALRNGPDPRRQSRRRHRLPRRRQSTLGARDWSLRLEQDSDPHPPDDTFSP) is disordered. A compositionally biased stretch (basic residues) spans 287-299 (QSRRRHRLPRRRQ). Basic and acidic residues predominate over residues 307–326 (WSLRLEQDSDPHPPDDTFSP).

The protein belongs to the carbohydrate kinase PfkB family.

It carries out the reaction D-fructose + ATP = D-fructose 6-phosphate + ADP + H(+). This Rhizobium leguminosarum bv. trifolii protein is Fructokinase (frk).